Here is a 180-residue protein sequence, read N- to C-terminus: Isopentenyl-diphosphate Delta-isomerase (180 aa).

His-26 and His-32 together coordinate Mn(2+). In terms of domain architecture, Nudix hydrolase spans Ala-30–Gln-168. Cys-70 is an active-site residue. Cys-70 serves as a coordination point for Mg(2+). A Mn(2+)-binding site is contributed by His-72. Glu-90 is a binding site for Mg(2+). Mn(2+) contacts are provided by Glu-117 and Glu-119. Glu-119 is an active-site residue.

It belongs to the IPP isomerase type 1 family. The cofactor is Mg(2+). Mn(2+) is required as a cofactor.

Its subcellular location is the cytoplasm. It catalyses the reaction isopentenyl diphosphate = dimethylallyl diphosphate. It functions in the pathway isoprenoid biosynthesis; dimethylallyl diphosphate biosynthesis; dimethylallyl diphosphate from isopentenyl diphosphate: step 1/1. Functionally, catalyzes the 1,3-allylic rearrangement of the homoallylic substrate isopentenyl (IPP) to its highly electrophilic allylic isomer, dimethylallyl diphosphate (DMAPP). In Photobacterium profundum (strain SS9), this protein is Isopentenyl-diphosphate Delta-isomerase.